Consider the following 68-residue polypeptide: Protein SlyX homolog (68 aa).

This sequence belongs to the SlyX family.

The polypeptide is Protein SlyX homolog (Brucella abortus (strain S19)).